The following is a 90-amino-acid chain: Translation initiation factor IF-1 (90 aa).

The S1-like domain occupies 7–76 (KEDVIRMEGT…TRGRIVYRKK (70 aa)).

The protein belongs to the IF-1 family. In terms of assembly, component of the 30S ribosomal translation pre-initiation complex which assembles on the 30S ribosome in the order IF-2 and IF-3, IF-1 and N-formylmethionyl-tRNA(fMet); mRNA recruitment can occur at any time during PIC assembly.

It localises to the cytoplasm. Functionally, one of the essential components for the initiation of protein synthesis. Stabilizes the binding of IF-2 and IF-3 on the 30S subunit to which N-formylmethionyl-tRNA(fMet) subsequently binds. Helps modulate mRNA selection, yielding the 30S pre-initiation complex (PIC). Upon addition of the 50S ribosomal subunit IF-1, IF-2 and IF-3 are released leaving the mature 70S translation initiation complex. The chain is Translation initiation factor IF-1 from Fervidobacterium nodosum (strain ATCC 35602 / DSM 5306 / Rt17-B1).